The sequence spans 142 residues: Large ribosomal subunit protein uL11 (142 aa).

It belongs to the universal ribosomal protein uL11 family. In terms of assembly, part of the ribosomal stalk of the 50S ribosomal subunit. Interacts with L10 and the large rRNA to form the base of the stalk. L10 forms an elongated spine to which L12 dimers bind in a sequential fashion forming a multimeric L10(L12)X complex. Post-translationally, one or more lysine residues are methylated.

In terms of biological role, forms part of the ribosomal stalk which helps the ribosome interact with GTP-bound translation factors. In Shewanella baltica (strain OS223), this protein is Large ribosomal subunit protein uL11.